The chain runs to 161 residues: Regulator of ribonuclease activity A (161 aa).

It belongs to the RraA family. In terms of assembly, homotrimer. Binds to both RNA-binding sites in the C-terminal region of Rne and to RhlB.

Its subcellular location is the cytoplasm. Globally modulates RNA abundance by binding to RNase E (Rne) and regulating its endonucleolytic activity. Can modulate Rne action in a substrate-dependent manner by altering the composition of the degradosome. Modulates RNA-binding and helicase activities of the degradosome. The polypeptide is Regulator of ribonuclease activity A (Shigella boydii serotype 18 (strain CDC 3083-94 / BS512)).